A 302-amino-acid polypeptide reads, in one-letter code: Geranylgeranyl diphosphate synthase (302 aa).

3 residues coordinate isopentenyl diphosphate: Lys-53, Arg-56, and His-87. Residues Asp-94 and Asp-100 each contribute to the Mg(2+) site. Arg-105 contributes to the (2E,6E)-farnesyl diphosphate binding site. Arg-106 contributes to the isopentenyl diphosphate binding site. Lys-189, Thr-190, and Gln-227 together coordinate (2E,6E)-farnesyl diphosphate.

The protein belongs to the FPP/GGPP synthase family. It depends on Mg(2+) as a cofactor.

The catalysed reaction is isopentenyl diphosphate + (2E,6E)-farnesyl diphosphate = (2E,6E,10E)-geranylgeranyl diphosphate + diphosphate. Its pathway is isoprenoid biosynthesis; geranylgeranyl diphosphate biosynthesis; geranylgeranyl diphosphate from farnesyl diphosphate and isopentenyl diphosphate: step 1/1. Its function is as follows. Catalyzes the condensation of farnesyl diphosphate (FPP) and isopentenyl diphosphate (IPP) to yield geranylgeranyl diphosphate (GGPP) needed for biosynthesis of carotenoids and diterpenes. The protein is Geranylgeranyl diphosphate synthase (crtE) of Pantoea ananas (Erwinia uredovora).